The chain runs to 94 residues: Co-chaperonin GroES (94 aa).

The protein belongs to the GroES chaperonin family. As to quaternary structure, heptamer of 7 subunits arranged in a ring. Interacts with the chaperonin GroEL.

The protein resides in the cytoplasm. Its function is as follows. Together with the chaperonin GroEL, plays an essential role in assisting protein folding. The GroEL-GroES system forms a nano-cage that allows encapsulation of the non-native substrate proteins and provides a physical environment optimized to promote and accelerate protein folding. GroES binds to the apical surface of the GroEL ring, thereby capping the opening of the GroEL channel. This chain is Co-chaperonin GroES, found in Bacillus cereus (strain ZK / E33L).